Reading from the N-terminus, the 217-residue chain is Variable small protein 22 (217 aa).

An N-terminal signal peptide occupies residues 1 to 18 (MRKRISAIIMTLFMVFMS). A lipid anchor (N-palmitoyl cysteine) is attached at C19. C19 is lipidated: S-diacylglycerol cysteine. The segment at 151–174 (LGKNDASDDDTKKAIKKDNSDKTK) is disordered. Residues 155–174 (DASDDDTKKAIKKDNSDKTK) show a composition bias toward basic and acidic residues.

This sequence belongs to the variable small protein (Vsp) family.

The protein resides in the cell outer membrane. Functionally, the Vlp and Vsp proteins are antigenically distinct proteins, only one vlp or vsp gene is transcriptionally active at any one time. Switching between these genes is a mechanism of host immune response evasion. The protein is Variable small protein 22 of Borrelia hermsii.